An 89-amino-acid chain; its full sequence is Large ribosomal subunit protein bL27 (89 aa).

Belongs to the bacterial ribosomal protein bL27 family.

The polypeptide is Large ribosomal subunit protein bL27 (Cytophaga hutchinsonii (strain ATCC 33406 / DSM 1761 / CIP 103989 / NBRC 15051 / NCIMB 9469 / D465)).